The sequence spans 477 residues: UTP--glucose-1-phosphate uridylyltransferase (477 aa).

N-acetylalanine is present on Ala2. UTP is bound by residues 92–95 (LNGG), Lys106, Gln169, and Gly198. 94–95 (GG) is a binding site for substrate. Substrate is bound by residues His199 and 227–229 (NSD). Asp229 and Lys367 together coordinate UTP.

This sequence belongs to the UDPGP type 1 family. Monomer. It depends on Mg(2+) as a cofactor.

The protein localises to the cytoplasm. It catalyses the reaction alpha-D-glucose 1-phosphate + UTP + H(+) = UDP-alpha-D-glucose + diphosphate. With respect to regulation, inhibition by uncomplexed, free UTP. Plays a central role as a glucosyl donor in cellular metabolic pathways. The sequence is that of UTP--glucose-1-phosphate uridylyltransferase from Solanum tuberosum (Potato).